Consider the following 568-residue polypeptide: Adenine deaminase (568 aa).

Belongs to the metallo-dependent hydrolases superfamily. Adenine deaminase family. It depends on Mn(2+) as a cofactor.

The catalysed reaction is adenine + H2O + H(+) = hypoxanthine + NH4(+). The polypeptide is Adenine deaminase (Clostridium perfringens (strain ATCC 13124 / DSM 756 / JCM 1290 / NCIMB 6125 / NCTC 8237 / Type A)).